A 252-amino-acid chain; its full sequence is tRNA pseudouridine synthase A (252 aa).

D52 acts as the Nucleophile in catalysis. Y110 lines the substrate pocket.

This sequence belongs to the tRNA pseudouridine synthase TruA family. As to quaternary structure, homodimer.

It carries out the reaction uridine(38/39/40) in tRNA = pseudouridine(38/39/40) in tRNA. Formation of pseudouridine at positions 38, 39 and 40 in the anticodon stem and loop of transfer RNAs. The polypeptide is tRNA pseudouridine synthase A (Blochmanniella floridana).